The primary structure comprises 386 residues: 1-deoxy-D-xylulose 5-phosphate reductoisomerase (386 aa).

NADPH-binding residues include Thr13, Gly14, Ser15, Ile16, Asn40, and Asn122. Residue Lys123 participates in 1-deoxy-D-xylulose 5-phosphate binding. Position 124 (Glu124) interacts with NADPH. Asp148 contributes to the Mn(2+) binding site. Residues Ser149, Glu150, Ser177, and His201 each contribute to the 1-deoxy-D-xylulose 5-phosphate site. Glu150 lines the Mn(2+) pocket. Gly207 contributes to the NADPH binding site. Residues Ser214, Asn219, Lys220, and Glu223 each contribute to the 1-deoxy-D-xylulose 5-phosphate site. Glu223 lines the Mn(2+) pocket.

Belongs to the DXR family. Requires Mg(2+) as cofactor. The cofactor is Mn(2+).

It carries out the reaction 2-C-methyl-D-erythritol 4-phosphate + NADP(+) = 1-deoxy-D-xylulose 5-phosphate + NADPH + H(+). Its pathway is isoprenoid biosynthesis; isopentenyl diphosphate biosynthesis via DXP pathway; isopentenyl diphosphate from 1-deoxy-D-xylulose 5-phosphate: step 1/6. Its function is as follows. Catalyzes the NADPH-dependent rearrangement and reduction of 1-deoxy-D-xylulose-5-phosphate (DXP) to 2-C-methyl-D-erythritol 4-phosphate (MEP). This chain is 1-deoxy-D-xylulose 5-phosphate reductoisomerase, found in Francisella tularensis subsp. holarctica (strain OSU18).